The primary structure comprises 130 residues: Large ribosomal subunit protein bL12 (130 aa).

Belongs to the bacterial ribosomal protein bL12 family. In terms of assembly, homodimer. Part of the ribosomal stalk of the 50S ribosomal subunit. Forms a multimeric L10(L12)X complex, where L10 forms an elongated spine to which 2 to 4 L12 dimers bind in a sequential fashion. Binds GTP-bound translation factors.

Its function is as follows. Forms part of the ribosomal stalk which helps the ribosome interact with GTP-bound translation factors. Is thus essential for accurate translation. This is Large ribosomal subunit protein bL12 from Mycolicibacterium vanbaalenii (strain DSM 7251 / JCM 13017 / BCRC 16820 / KCTC 9966 / NRRL B-24157 / PYR-1) (Mycobacterium vanbaalenii).